Here is a 235-residue protein sequence, read N- to C-terminus: LexA repressor (235 aa).

A DNA-binding region (H-T-H motif) is located at residues 47–67 (IREIADAVGLTSTSSVAHQLR). Active-site for autocatalytic cleavage activity residues include Ser159 and Lys196.

This sequence belongs to the peptidase S24 family. Homodimer.

The catalysed reaction is Hydrolysis of Ala-|-Gly bond in repressor LexA.. Its function is as follows. Represses a number of genes involved in the response to DNA damage (SOS response), including recA and lexA. In the presence of single-stranded DNA, RecA interacts with LexA causing an autocatalytic cleavage which disrupts the DNA-binding part of LexA, leading to derepression of the SOS regulon and eventually DNA repair. The protein is LexA repressor of Mycobacterium leprae (strain Br4923).